The following is a 950-amino-acid chain: Sodium/calcium exchanger Calx (950 aa).

The signal sequence occupies residues 1 to 22 (MQLLLKSIFTCALFVIFVYATA). At 23–120 (QSLLKVQETE…PQRNISVGDR (98 aa)) the chain is on the extracellular side. Residues N39, N47, and N114 are each glycosylated (N-linked (GlcNAc...) asparagine). A helical transmembrane segment spans residues 121-141 (LVRGFVYFVLLIYLFVGVSII). Residues 142–179 (ADRFMAAIEAITSIERAVVVKGPNNTKQVMHVRIWNET) are Cytoplasmic-facing. A helical transmembrane segment spans residues 180–200 (VANLTLMALGSSAPEILLSVI). The Extracellular portion of the chain corresponds to 201-216 (EIYAKDFESGDLGPGT). The helical transmembrane segment at 217 to 237 (IVGSAAYNLFMIIAVCMIWIP) threads the bilayer. The Cytoplasmic segment spans residues 238-257 (AGEVRRIRHLRVFFVTALFS). The next 2 helical transmembrane spans lie at 258–278 (VFAYVWLWLILSVFTPGVILV) and 279–299 (WEAIVTLLFFPLTVLWAYIAE). At 300–749 (RRLLVYKYMD…NDDEEEEVPS (450 aa)) the chain is on the cytoplasmic side. Residues 301–318 (RLLVYKYMDKNYRVNKRG) form a corresponds to the exchanger inhibitory peptide (XIP) found in other sodium/calcium exchange proteins and thought to be involved in calmodulin binding region. Residues 440–551 (DPIRMYFEPG…MIATVMILDD (112 aa)) enclose the Calx-beta 1 domain. Ca(2+) is bound by residues E455, D490, D515, D516, V518, E520, E523, D550, D551, and D552. Positions 555–694 (GIFAFTDSVF…LTTAYVRIRE (140 aa)) constitute a Calx-beta 2 domain. Residues 750 to 770 (CFSYVSHFVCLFWKVLFAFVP) traverse the membrane as a helical segment. Over 771–775 (PTDIC) the chain is Extracellular. A helical transmembrane segment spans residues 776–796 (GGYVTFVVSIFVIGVITAIIG). The Cytoplasmic segment spans residues 797–813 (DAASYFGCALNIKDSVT). A helical transmembrane segment spans residues 814 to 834 (AILFVALGTSIPDTFASMIAA). Over 835–848 (KHDEGADNCIGNVT) the chain is Extracellular. N846 carries N-linked (GlcNAc...) asparagine glycosylation. The helical transmembrane segment at 849–869 (GSNAVNVFLGIGLAWTIAAVY) threads the bilayer. Residues 870–883 (HSSHGMTFNVEPGT) are Cytoplasmic-facing. The helical transmembrane segment at 884–904 (IGFAVALFCGEALIAIMLIMF) threads the bilayer. Over 905 to 923 (RRWHKGIGAELGGPKVSKY) the chain is Extracellular. A helical membrane pass occupies residues 924–944 (ISAAILVFLWVFYVVICILEA). Over 945 to 950 (YDVIRV) the chain is Cytoplasmic.

It belongs to the Ca(2+):cation antiporter (CaCA) (TC 2.A.19) family. SLC8 subfamily. As to expression, ubiquitously expressed with higher expression in head compared to body (at protein level). Enriched in photoreceptor cells of the eye (at protein level). In the adult head, expressed in retina, optic ganglia and all neuronal tissues.

The protein localises to the cell membrane. It localises to the cell projection. It is found in the rhabdomere membrane. It catalyses the reaction Ca(2+)(in) + 3 Na(+)(out) = Ca(2+)(out) + 3 Na(+)(in). With respect to regulation, activated by a Na(+) electrochemical gradient but also undergoes Na(2+)-dependent inactivation. Inhibited by micromolar levels of cytoplasmic Ca(2+), which is the opposite of most characterized mammalian homologs. Exhibits greater extent of inhibition by Ca(2+) than isoform D/1.2. Its activity is regulated as follows. Exhibits greater Na(2+)-dependent inactivation than isoform A/1.1, probably due to greater stability of the inactive Na(2+)-bound form. Functionally, na(+)/Ca(2+) antiporter that couples the energy of a Na(+) electrochemical gradient to the movement of Ca(2+) against an electrochemical gradient across a membrane, which contributes to the regulation of cytoplasmic Ca(2+) levels. Mediates Na(+)/Ca(2+) exchange in photoreceptor cells and involved in controlling Ca(2+) levels during phototransduction, affecting magnitude of the photoresponse, activation kinetics, signal amplification, response termination, and light adaptation. Light induced depolarization of photoreceptor cells, resulting in Na(+) and Ca(2+) entry through trp/transient receptor potential protein channels, is essential for photoreceptor cell function but may result in toxic levels of cytoplasmic Ca(2+). Na(+)/Ca(2+) antiporter regulation of Ca(2+) levels protects photoreceptor cells from light-dependent retinal degeneration. This Drosophila melanogaster (Fruit fly) protein is Sodium/calcium exchanger Calx.